Here is a 168-residue protein sequence, read N- to C-terminus: Mitochondrial inner membrane protein SHH4 (168 aa).

The N-terminal 23 residues, 1-23 (MSSTKFLKPLCRIRAFHTSIARS), are a transit peptide targeting the mitochondrion. Residues 24 to 65 (FTIPFLPKIPQKPGGVSGTANDSSYMPPESRAQGSYHWIVER) are Mitochondrial matrix-facing. Residues 66-86 (GLSLAVLPLIAVPLVTTGPIS) form a helical membrane-spanning segment. The Mitochondrial intermembrane portion of the chain corresponds to 87 to 92 (TFTDTF). The chain crosses the membrane as a helical span at residues 93–113 (LSLVLLGHCHIGFQSCIIDYI). Cys-101 is a binding site for heme. Residue Tyr-112 coordinates a ubiquinone. Residues 114–120 (SERVYGK) are Mitochondrial matrix-facing. Residues 121–141 (VHHYAMYLLSLGSFLSFVGIY) traverse the membrane as a helical segment. At 142–168 (KLESQEAGLIASLKSLWDNKPVEKKRQ) the chain is on the mitochondrial intermembrane side.

It belongs to the CybS family. As to quaternary structure, interacts with SDH3.

It localises to the mitochondrion inner membrane. Its function is as follows. Homolog of SDH4, but seems not to be a stoichiometric subunit of either the succinate dehydrogenase (SDH) complex or the mitochondrial inner membrane translocase TIM22 complex. The chain is Mitochondrial inner membrane protein SHH4 from Saccharomyces cerevisiae (strain ATCC 204508 / S288c) (Baker's yeast).